An 807-amino-acid polypeptide reads, in one-letter code: Oxysterol-binding protein 1 (807 aa).

The residue at position 2 (A2) is an N-acetylalanine. The disordered stretch occupies residues 61–86 (GAGGVAAAGPAPAPPTGGSGGSGAGG). Over residues 77–86 (GGSGGSGAGG) the composition is skewed to gly residues. One can recognise a PH domain in the interval 88–181 (GSAREGWLFK…WVTALELAKA (94 aa)). An a 1,2-diacyl-sn-glycero-3-phospho-(1D-myo-inositol 4-phosphate)-binding site is contributed by 117-122 (LSYYRS). 5 positions are modified to phosphoserine: S190, S193, S198, S238, and S240. A coiled-coil region spans residues 291–326 (QKSLQYERDQRIRLEETLEQLAKQHNHLERAFRGAT). Q314 contributes to the 20-hydroxycholesterol binding site. Q314 is a binding site for 25-hydroxycholesterol. Q314 is a 7beta-hydroxycholesterol binding site. A cholesterol-binding site is contributed by Q314. Position 314 (Q314) interacts with ergosterol. Positions 329–353 (PANTPGNVGSGKDQCCSGKGDMSDE) are disordered. 3 positions are modified to phosphoserine: S338, S345, and S351. Positions 358–364 (EFFDAPE) match the FFAT motif. T377 bears the Phosphothreonine mark. Residues S379, S382, S385, S386, and S389 each carry the phosphoserine modification. Residues 493-496 (KPFN) and 522-523 (HH) contribute to the a 1,2-diacyl-sn-glycero-3-phospho-(1D-myo-inositol 4-phosphate) site. The interval 710-759 (TAPTDSRLRPDQRLMENGRWDEANAEKQRLEEKQRLSRKKREAEAMKATE) is disordered. Positions 715–759 (SRLRPDQRLMENGRWDEANAEKQRLEEKQRLSRKKREAEAMKATE) are enriched in basic and acidic residues. The stretch at 730-760 (DEANAEKQRLEEKQRLSRKKREAEAMKATED) forms a coiled coil.

It belongs to the OSBP family. As to quaternary structure, homodimer or homotrimer. Interacts (via FFAT motif) with VAPA. Interacts (via C-terminus) with RELCH (via the third HEAT repeat). Found in a complex composed of RELCH, OSBP1 and RAB11A. In terms of tissue distribution, widely expressed.

The protein resides in the cytoplasm. It localises to the cytosol. Its subcellular location is the perinuclear region. It is found in the golgi apparatus membrane. The protein localises to the endoplasmic reticulum membrane. The protein resides in the golgi apparatus. It localises to the trans-Golgi network. Its function is as follows. Lipid transporter involved in lipid countertransport between the Golgi complex and membranes of the endoplasmic reticulum: specifically exchanges sterol with phosphatidylinositol 4-phosphate (PI4P), delivering sterol to the Golgi in exchange for PI4P, which is degraded by the SAC1/SACM1L phosphatase in the endoplasmic reticulum. Binds cholesterol and a range of oxysterols including 25-hydroxycholesterol. Cholesterol binding promotes the formation of a complex with PP2A and a tyrosine phosphatase which dephosphorylates ERK1/2, whereas 25-hydroxycholesterol causes its disassembly. Regulates cholesterol efflux by decreasing ABCA1 stability. The protein is Oxysterol-binding protein 1 of Homo sapiens (Human).